The sequence spans 176 residues: Peptide deformylase (176 aa).

Residues C94 and H136 each contribute to the Fe cation site. The active site involves E137. H140 is a Fe cation binding site.

The protein belongs to the polypeptide deformylase family. The cofactor is Fe(2+).

It carries out the reaction N-terminal N-formyl-L-methionyl-[peptide] + H2O = N-terminal L-methionyl-[peptide] + formate. Functionally, removes the formyl group from the N-terminal Met of newly synthesized proteins. Requires at least a dipeptide for an efficient rate of reaction. N-terminal L-methionine is a prerequisite for activity but the enzyme has broad specificity at other positions. The chain is Peptide deformylase from Bartonella henselae (strain ATCC 49882 / DSM 28221 / CCUG 30454 / Houston 1) (Rochalimaea henselae).